A 290-amino-acid chain; its full sequence is UPF0046 protein K07C11.7 (290 aa).

The N-terminal stretch at 1–22 is a signal peptide; it reads MFHFSIGTVLISICWLAQWMEA. An N-linked (GlcNAc...) asparagine glycan is attached at Asn204.

The protein belongs to the UPF0046 family.

The sequence is that of UPF0046 protein K07C11.7 from Caenorhabditis elegans.